The primary structure comprises 103 residues: Small ribosomal subunit protein uS14c (103 aa).

It belongs to the universal ribosomal protein uS14 family. Part of the 30S ribosomal subunit.

It is found in the plastid. The protein localises to the chloroplast. In terms of biological role, binds 16S rRNA, required for the assembly of 30S particles. This chain is Small ribosomal subunit protein uS14c, found in Lolium perenne (Perennial ryegrass).